The chain runs to 67 residues: Peptide Hp1036 (67 aa).

The first 23 residues, 1–23, serve as a signal peptide directing secretion; that stretch reads MKTQFAILLITLVLFQMFSQSDA. Phe-36 carries the phenylalanine amide modification. The propeptide occupies 40–67; it reads GLNDLSDLDELFDGEISEADVDFLREIM.

Belongs to the non-disulfide-bridged peptide (NDBP) superfamily. Short antimicrobial peptide (group 4) family. Expressed by the venom gland.

It localises to the secreted. The protein localises to the target cell membrane. Amphipathic peptide with antibacterial activities. Shows antiviral activities against the herpes simplex virus type-1. It potently inhibits the initial infection by provoking the rupture of viral envelop and the dissociation of proteins from the virions (EC(50) is 0.43 uM). It also effectively inhibits viral attachment (EC(50) is 2.87 uM), viral entry (EC(50) is 4.29 uM) and viral proliferation after infection (EC(50) is 7.86). Morever, it enters mammalian tested cells (Vero) and reduces the intracellular infectivity. This chain is Peptide Hp1036, found in Heterometrus petersii (Asian forest scorpion).